Reading from the N-terminus, the 510-residue chain is NAD(P)H-quinone oxidoreductase subunit 2, chloroplastic (510 aa).

The next 13 membrane-spanning stretches (helical) occupy residues 26 to 46 (LFDG…ILLL), 57 to 77 (IPWL…ALLF), 99 to 119 (IFQV…VEYI), 124 to 144 (MAIT…MFLC), 149 to 169 (LITI…LSGY), 184 to 204 (LLMG…LYGL), 227 to 247 (PGIS…LSPA), 295 to 315 (WHLL…LIAI), 323 to 343 (MLAY…IVGD), 354 to 374 (YMLF…LFGL), 395 to 415 (ALSL…AGFF), 418 to 438 (LYLF…IALV), and 484 to 504 (MIVC…IIAI).

The protein belongs to the complex I subunit 2 family. As to quaternary structure, NDH is composed of at least 16 different subunits, 5 of which are encoded in the nucleus.

It is found in the plastid. Its subcellular location is the chloroplast thylakoid membrane. It catalyses the reaction a plastoquinone + NADH + (n+1) H(+)(in) = a plastoquinol + NAD(+) + n H(+)(out). The enzyme catalyses a plastoquinone + NADPH + (n+1) H(+)(in) = a plastoquinol + NADP(+) + n H(+)(out). In terms of biological role, NDH shuttles electrons from NAD(P)H:plastoquinone, via FMN and iron-sulfur (Fe-S) centers, to quinones in the photosynthetic chain and possibly in a chloroplast respiratory chain. The immediate electron acceptor for the enzyme in this species is believed to be plastoquinone. Couples the redox reaction to proton translocation, and thus conserves the redox energy in a proton gradient. In Trachelium caeruleum (Blue throatwort), this protein is NAD(P)H-quinone oxidoreductase subunit 2, chloroplastic.